The chain runs to 100 residues: Putative septation protein SpoVG (100 aa).

This sequence belongs to the SpoVG family.

Could be involved in septation. The chain is Putative septation protein SpoVG from Staphylococcus haemolyticus (strain JCSC1435).